The sequence spans 449 residues: UNC93-like protein MFSD11 (449 aa).

A helical membrane pass occupies residues 8-28 (LFNIIILGVAFMFMFTAFQTC). A glycan (N-linked (GlcNAc...) asparagine) is linked at Asn40. A run of 5 helical transmembrane segments spans residues 53 to 73 (AIIY…VAIV), 74 to 94 (GPQL…AVFI), 96 to 116 (PFPW…AVLW), 138 to 158 (IFWA…YFAW), and 170 to 190 (RTVF…FFLI). Residue Ser204 is modified to Phosphoserine. The next 6 membrane-spanning stretches (helical) occupy residues 239 to 259 (MLLL…FSGV), 277 to 297 (LIGL…SLFG), 309 to 329 (PVVL…FLNM), 359 to 379 (FLLG…LGFL), 385 to 405 (APAF…AFFY), and 410 to 430 (LLHW…ISFF).

It belongs to the unc-93 family.

It localises to the membrane. The sequence is that of UNC93-like protein MFSD11 (MFSD11) from Homo sapiens (Human).